A 177-amino-acid polypeptide reads, in one-letter code: Large ribosomal subunit protein uL6 (177 aa).

The protein belongs to the universal ribosomal protein uL6 family. Part of the 50S ribosomal subunit.

In terms of biological role, this protein binds to the 23S rRNA, and is important in its secondary structure. It is located near the subunit interface in the base of the L7/L12 stalk, and near the tRNA binding site of the peptidyltransferase center. The sequence is that of Large ribosomal subunit protein uL6 from Photobacterium profundum (strain SS9).